Here is a 702-residue protein sequence, read N- to C-terminus: Protein sepa-1 (702 aa).

Residues 39–160 (RQRFCYEKTD…KESTSYGQFR (122 aa)) form a required for self-association and interaction with pgl-3 region. 3 short sequence motifs (LIR) span residues 107 to 110 (FVEV), 247 to 250 (FQKI), and 298 to 301 (FGFV). The tract at residues 450 to 471 (AKDPEEPTTAASEGGNTYGYQE) is disordered. Polar residues predominate over residues 458 to 468 (TAASEGGNTYG). The LIR 4 motif lies at 469–472 (YQEL). Residues 508–543 (AAMDKKKKRRELKSRLNKINAQIDELEKRRMERAGK) are a coiled coil. A disordered region spans residues 545 to 564 (QVVSSSVPSEEAAQVEAPAS). One can recognise a KIX domain in the interval 597–674 (NTSKEWIVED…TVDQILKKTL (78 aa)). Residues 675–685 (KKDQRATEHNH) are compositionally biased toward basic and acidic residues. The segment at 675–702 (KKDQRATEHNHQQPTQSSDELAKNHEKN) is disordered.

Self-associates. Interacts (via the LIR motifs) with lgg-1; the interaction is direct. Interacts (via the LIR motifs) with lgg-2; the interaction is direct. Interacts with pgl-3; interaction is enhanced in the presence of RNA. Interacts with epg-2; may be modulated by prmt-1. In terms of processing, degraded by autophagy.

Its subcellular location is the nucleus. The protein resides in the cytoplasm. The protein localises to the cytoplasmic granule. Functionally, adapter protein that connects P-granules in somatic cells with the autophagic machinery. Association with other adapters such as epg-2 and P-granule components such as pgl-3 is required for the accumulation and degradation of P-granules by autophagy in somatic cells. This ensures exclusive localization of the P-granules in germ cells. The protein is Protein sepa-1 of Caenorhabditis elegans.